The sequence spans 573 residues: Probable zinc metallopeptidase EGY3, chloroplastic (573 aa).

Residues 1 to 50 constitute a chloroplast transit peptide; it reads MASLFVSTPSSSLTLKSCHSLHLRRFDRAEFSNFGKASVNQTTRSRHSLR. Residues 38–105 form a disordered region; sequence SVNQTTRSRH…EKKSKQQEMD (68 aa). 2 stretches are compositionally biased toward basic and acidic residues: residues 52-62 and 96-105; these read SAEDDRVREPV and EKKSKQQEMD. The stretch at 122-185 forms a coiled coil; sequence EAAIKLEKTR…KALDLNKLKS (64 aa). The next 7 membrane-spanning stretches (helical) occupy residues 274 to 294, 305 to 325, 376 to 396, 414 to 434, 441 to 461, 493 to 513, and 536 to 556; these read VSAI…SGFF, IANV…SEIA, ASAY…DGSF, PLLS…GNVL, VGVP…VTSL, LLLG…GLFA, and FAWG…NSGG.

It belongs to the peptidase M50B family.

The protein localises to the plastid. It localises to the chloroplast membrane. Probable membrane-associated metalloprotease that may be involved in chloroplast development. This is Probable zinc metallopeptidase EGY3, chloroplastic (EGY3) from Arabidopsis thaliana (Mouse-ear cress).